A 314-amino-acid chain; its full sequence is Nodulation protein D 2 (314 aa).

One can recognise an HTH lysR-type domain in the interval 6–63; sequence LDLNLLVVLDALMTERNLTAAARSINLSQPAMSAAVARLRTNFRDDLFAMAGREFIPT. The segment at residues 23–42 is a DNA-binding region (H-T-H motif); that stretch reads LTAAARSINLSQPAMSAAVA.

Belongs to the LysR transcriptional regulatory family.

Functionally, nodD regulates the expression of the nodABCFE genes which encode other nodulation proteins. NodD is also a negative regulator of its own expression. Binds flavonoids as inducers. This Rhizobium tropici protein is Nodulation protein D 2 (nodD2).